The sequence spans 944 residues: Translation initiation factor IF-2 (944 aa).

Disordered stretches follow at residues 50 to 91 (SAKT…FAGK) and 114 to 349 (KVEV…VPAT). Composition is skewed to basic and acidic residues over residues 75-86 (ESAKKNKEDHPR), 124-157 (VVTEKPKASEPVKKAEPKVEAKSEPKVEKVETKD), 164-185 (AEVKPENVADKKEPVVTEEKKK), and 199-233 (KRAEDIKKEQAAARPEKKKFDKNRNDRNNRSDNRR). Positions 267 to 280 (SSGSAPATDSFTPA) are enriched in polar residues. Residues 286–307 (SRRDRDRKKSDNNRDNTKDGNR) are compositionally biased toward basic and acidic residues. Polar residues-rich tracts occupy residues 317–331 (NRNQVRNARNSNWNQ) and 338–348 (YQNNQSSSVPA). One can recognise a tr-type G domain in the interval 443-614 (ERPAVVTIMG…LLVAEVQELK (172 aa)). The interval 452–459 (GHVDHGKT) is G1. Residue 452 to 459 (GHVDHGKT) coordinates GTP. The interval 477-481 (GITQH) is G2. The tract at residues 498–501 (DTPG) is G3. Residues 498-502 (DTPGH) and 552-555 (NKID) each bind GTP. The tract at residues 552 to 555 (NKID) is G4. The interval 590 to 592 (SAK) is G5.

The protein belongs to the TRAFAC class translation factor GTPase superfamily. Classic translation factor GTPase family. IF-2 subfamily.

It localises to the cytoplasm. In terms of biological role, one of the essential components for the initiation of protein synthesis. Protects formylmethionyl-tRNA from spontaneous hydrolysis and promotes its binding to the 30S ribosomal subunits. Also involved in the hydrolysis of GTP during the formation of the 70S ribosomal complex. The polypeptide is Translation initiation factor IF-2 (infB) (Lactococcus lactis subsp. lactis (strain IL1403) (Streptococcus lactis)).